A 487-amino-acid polypeptide reads, in one-letter code: b(0,+)-type amino acid transporter 1 (487 aa).

Positions 1 to 15 are enriched in basic and acidic residues; the sequence is MGDTGLRKRREDEKS. Residues 1 to 22 are disordered; it reads MGDTGLRKRREDEKSIQSQEPK. At 1–31 the chain is on the cytoplasmic side; it reads MGDTGLRKRREDEKSIQSQEPKTTSLQKELG. Residue Ser-18 is modified to Phosphoserine. Residues 32–55 traverse the membrane as a helical segment; that stretch reads LISGISIIVGTIIGSGIFVSPKSV. Position 43–47 (43–47) interacts with L-arginine; that stretch reads IIGSG. Over 56 to 62 the chain is Extracellular; sequence LSNTEAV. Residues 63–84 form a helical membrane-spanning segment; the sequence is GPCLIIWAACGVLATLGALCFA. Topologically, residues 85–110 are cytoplasmic; that stretch reads ELGTMITKSGGEYPYLMEAYGPIPAY. The chain crosses the membrane as a helical span at residues 111–137; that stretch reads LFSWASLIVIKPTSFAIICLSFSEYVC. Over 138-147 the chain is Extracellular; that stretch reads APFYVGCKPP. Transmembrane regions (helical) follow at residues 148–169 and 170–193; these read QIVV…NSLS and VRLG…IIII. The Extracellular segment spans residues 194 to 217; the sequence is SGLVLLAQGNTKNFDNSFEGAQLS. Residues 218-238 form a helical membrane-spanning segment; it reads VGAISLAFYNGLWAYDGWNQL. An L-arginine-binding site is contributed by Asp-233. Over 239 to 251 the chain is Cytoplasmic; it reads NYITEELRNPYRN. Residues 252-274 traverse the membrane as a helical segment; it reads LPLAIIIGIPLVTACYILMNVSY. Over 275-302 the chain is Extracellular; that stretch reads FTVMTATELLQSQAVAVTFGDRVLYPAS. Residues 303 to 325 form a helical membrane-spanning segment; sequence WIVPLFVAFSTIGAANGTCFTAG. Over 326-351 the chain is Cytoplasmic; that stretch reads RLIYVAGREGHMLKVLSYISVRRLTP. Helical transmembrane passes span 352-370 and 371-391; these read APAI…IPGD and INSL…LTIL. Residues 392–410 lie on the Cytoplasmic side of the membrane; that stretch reads GLIVMRFTRKELERPIKVP. Residues 411 to 431 form a helical membrane-spanning segment; it reads VVIPVLMTLISVFLVLAPIIS. Over 432–434 the chain is Extracellular; that stretch reads KPT. A helical membrane pass occupies residues 435–450; that stretch reads WEYLYCVLFILSGLLF. The Cytoplasmic segment spans residues 451–487; sequence YFLFVHYKFGWAQKISKPITMHLQMLMEVVPPEEDPE.

The protein belongs to the amino acid-polyamine-organocation (APC) superfamily. As to quaternary structure, disulfide-linked heterodimer composed of the catalytic light chain subunit SLC7A9 and the heavy chain subunit SLC3A1. The heterodimer is the minimal functional unit. Assembles in heterotetramers (dimers of heterodimers) and higher order oligomers; the oligomerization is mediated by SLC3A1 likely to prevent degradation and facilitate heteromer trafficking to the plasma membrane. Interacts with CAV1. Expressed in the brush border membrane in the kidney (at protein level). Kidney, small intestine, liver and placenta.

It localises to the apical cell membrane. The protein resides in the cell membrane. It carries out the reaction L-leucine(out) + L-arginine(in) = L-leucine(in) + L-arginine(out). It catalyses the reaction L-histidine(out) + L-arginine(in) = L-histidine(in) + L-arginine(out). The catalysed reaction is L-arginine(in) + L-phenylalanine(out) = L-arginine(out) + L-phenylalanine(in). The enzyme catalyses L-cysteine(out) + L-arginine(in) = L-cysteine(in) + L-arginine(out). It carries out the reaction L-cystine(out) + L-arginine(in) = L-cystine(in) + L-arginine(out). It catalyses the reaction L-lysine(out) + L-arginine(in) = L-lysine(in) + L-arginine(out). Its function is as follows. Associates with SLC3A1 to form a functional transporter complex that mediates the electrogenic exchange between cationic amino acids and neutral amino acids, with a stoichiometry of 1:1. Has system b(0,+)-like activity with high affinity for extracellular cationic amino acids and L-cystine and lower affinity for intracellular neutral amino acids. Substrate exchange is driven by high concentration of intracellular neutral amino acids and the intracellular reduction of L-cystine to L-cysteine. Required for reabsorption of L-cystine and dibasic amino acids across the brush border membrane in renal proximal tubules. This Homo sapiens (Human) protein is b(0,+)-type amino acid transporter 1.